A 347-amino-acid polypeptide reads, in one-letter code: NADH-ubiquinone oxidoreductase chain 2 (347 aa).

10 helical membrane passes run Pro3–Ser23, His25–Met45, Tyr59–Leu79, Ile96–Pro116, Gly148–Leu170, Ile178–Pro198, Met200–Met220, Ile247–Ile267, Ile276–Leu296, and Leu326–Leu346.

Belongs to the complex I subunit 2 family. Core subunit of respiratory chain NADH dehydrogenase (Complex I) which is composed of 45 different subunits. Interacts with TMEM242.

It localises to the mitochondrion inner membrane. It catalyses the reaction a ubiquinone + NADH + 5 H(+)(in) = a ubiquinol + NAD(+) + 4 H(+)(out). In terms of biological role, core subunit of the mitochondrial membrane respiratory chain NADH dehydrogenase (Complex I) which catalyzes electron transfer from NADH through the respiratory chain, using ubiquinone as an electron acceptor. Essential for the catalytic activity and assembly of complex I. The chain is NADH-ubiquinone oxidoreductase chain 2 from Saccopteryx leptura (Lesser sac-winged bat).